Reading from the N-terminus, the 2844-residue chain is Sodium channel protein 60E (2844 aa).

Topologically, residues 1–121 (MSDDQATFND…WSPARRVCVY (121 aa)) are cytoplasmic. The stretch at 107-434 (FLFYPWSPAR…FDPSVLNVKK (328 aa)) is one I repeat. Residues 122–145 (IATNQFFDYCVMATILFNCIFLAM) form a helical membrane-spanning segment. Residues 146-151 (TETVEE) are Extracellular-facing. A helical membrane pass occupies residues 152–172 (AEYIFLAIYSIEMVIKIIAKG). Residues 173 to 183 (FLLNKYTYLRN) are Cytoplasmic-facing. A helical transmembrane segment spans residues 184–202 (PWNWLDFVVITSGYATIGM). Over 203-208 (EVGNLA) the chain is Extracellular. A helical; Voltage-sensor transmembrane segment spans residues 209–228 (GLRTFRVLRALKTVSIMPGL). The Cytoplasmic segment spans residues 229 to 244 (KTIINALLHSFRQLAE). The chain crosses the membrane as a helical span at residues 245-265 (VMTLTIFCLMVFALFALQVYM). Residues 266–340 (GELRNKCVRQ…PNHGYTNFDN (75 aa)) lie on the Extracellular side of the membrane. C272 and C318 are oxidised to a cystine. Residues N282, N293, and N311 are each glycosylated (N-linked (GlcNAc...) asparagine). The pore-forming intramembrane region spans 341–365 (FMWSMLTTFQLITLDYWENVYNMVL). The Extracellular portion of the chain corresponds to 366-374 (ATCGPMSVS). Residues 375–395 (FFTVVVFFGSFYLINLMLAVV) traverse the membrane as a helical segment. The Cytoplasmic segment spans residues 396-687 (ALSYEEEAEI…QNCLYKVVRD (292 aa)). A disordered region spans residues 452 to 610 (ASYSKKKTRR…QDTTNDMGHV (159 aa)). Over residues 455–465 (SKKKTRRKKTK) the composition is skewed to basic residues. Gly residues predominate over residues 469-479 (EGGTNGNGNGS). Low complexity-rich tracts occupy residues 511–520 (QAQKQYQQME) and 577–586 (SSNSSGVNRE). A compositionally biased stretch (acidic residues) spans 593–603 (GVVDDHEEQDT). The stretch at 668-1130 (CTDYESWLQF…ESIELLGQYN (463 aa)) is one II repeat. The helical transmembrane segment at 688-708 (PLFELAITLCIVLNTAFLAME) threads the bilayer. The Extracellular segment spans residues 709–718 (HHGMSESFRN). Residues 719–743 (ALDVGNKVFTSIFTFECIVKLMALS) form a helical membrane-spanning segment. The Cytoplasmic segment spans residues 744–749 (KDFFLC). Residues 750–769 (GWNIFDLLIVTASLLDIIFE) traverse the membrane as a helical segment. Topologically, residues 770–775 (LVDGLS) are extracellular. The chain crosses the membrane as a helical; Voltage-sensor span at residues 776–795 (VLRGLRLLRVLKLAQSWTTM). Over 796 to 810 (KVLLSIIISTIGALG) the chain is Cytoplasmic. The chain crosses the membrane as a helical span at residues 811–832 (NLTLILVIVIYIFAVIGMQLFS). The Extracellular segment spans residues 833 to 852 (KDYTPEKFDPDPVPRWNFND). Positions 853-873 (FFHSFMMIFRILCGEWIEPLW) form an intramembrane region, pore-forming. The Extracellular portion of the chain corresponds to 874–889 (DCMRAEEEQGASTCFA). A disulfide bridge connects residues C875 and C887. A helical transmembrane segment spans residues 890–910 (IFLPTLVMGNFMVLNLFLALL). The Cytoplasmic portion of the chain corresponds to 911 to 1742 (LNSFNSEELK…SAKHWTRVRT (832 aa)). Over residues 1129–1157 (YNSTDTDPYANDQRSGCGSFNRGDSLQDN) the composition is skewed to polar residues. 5 disordered regions span residues 1129–1166 (YNSTDTDPYANDQRSGCGSFNRGDSLQDNSSRRYGSEE), 1185–1224 (YRKSLDRLSQSSGQSQRSLLKSEEAEMRRHSSGQSLNSMS), 1268–1288 (ISNVMRSRRPSSQMGQPENET), 1577–1630 (APTP…ADAS), and 1635–1654 (LAMAQKTEQSQSTAPDATQK). Positions 1191-1203 (RLSQSSGQSQRSL) are enriched in low complexity. Residues 1204–1213 (LKSEEAEMRR) show a composition bias toward basic and acidic residues. Polar residues-rich tracts occupy residues 1277–1286 (PSSQMGQPEN), 1604–1618 (PQSTLDKAASFQSAR), and 1640–1654 (KTEQSQSTAPDATQK). The stretch at 1723–2040 (PWFMSCMDTQ…QKHYYTAMKK (318 aa)) is one III repeat. The helical transmembrane segment at 1743 to 1763 (AVLTVVDTPAFEWFVLVLIFA) threads the bilayer. Residues 1764–1789 (SSITLCFEDINLDKNKTLKRVLYWIN) are Extracellular-facing. N-linked (GlcNAc...) asparagine glycans are attached at residues N1778 and N1789. The helical transmembrane segment at 1790 to 1810 (FSFCLIFVVEMILKWLALGFS) threads the bilayer. Over 1811-1813 (KYF) the chain is Cytoplasmic. Residues 1814–1834 (TSFWTILDFIIVFVSVFSLLI) traverse the membrane as a helical segment. Residues 1835 to 1839 (EENEN) lie on the Extracellular side of the membrane. A helical; Voltage-sensor membrane pass occupies residues 1840–1861 (LKVLRSLRTLRALRPLRAISRW). Topologically, residues 1862-1880 (QGMRIVVNALMYAIPSIFN) are cytoplasmic. The helical transmembrane segment at 1881 to 1902 (VLLVCLVFWLIFSIMGVQFFGG) threads the bilayer. Topologically, residues 1903-1943 (KFFKCVNEMGELLPITEVNDKWDCIEQNYTWINSKITFDHV) are extracellular. N-linked (GlcNAc...) asparagine glycosylation is present at N1930. The pore-forming intramembrane region spans 1944–1965 (GMGYLALLQVATFEGWMEVMAD). The Extracellular segment spans residues 1966–1981 (AVDARGVDLQPQREAN). A helical membrane pass occupies residues 1982–2002 (LYAYIYFVIFIVCGSFFTLNL). The Cytoplasmic segment spans residues 2003-2069 (FIGVIIDNFN…MFYDLSNSRR (67 aa)). The IV repeat unit spans residues 2050-2311 (IKRPINHFLA…NMYIAIILEN (262 aa)). A helical membrane pass occupies residues 2070–2090 (FEIAIFVLIFLNMLTMGIEHY). The Extracellular portion of the chain corresponds to 2091 to 2095 (DQPHA). Residues 2096-2116 (VFFILEVSNAFFTTVFGLEAI) traverse the membrane as a helical segment. At 2117-2132 (VKIVGLRYHYFTVPWN) the chain is on the cytoplasmic side. Residues 2133–2153 (VFDFLLVLASIFGILMEDIMI) form a helical membrane-spanning segment. The Extracellular portion of the chain corresponds to 2154–2162 (DLPISPTLL). Residues 2163–2184 (RVVRVFRIGRILRLIKAAKGIR) traverse the membrane as a helical; Voltage-sensor segment. At 2185–2199 (KLLFALVVSLPALFN) the chain is on the cytoplasmic side. The chain crosses the membrane as a helical span at residues 2200-2220 (IGALLGLITFIYAILGMSLFG). Topologically, residues 2221–2236 (NVKLQGALDDMVNFQT) are extracellular. An intramembrane region (pore-forming) is located at residues 2237–2259 (FGRSMQLLFRLMTSAGWNDVLES). Over 2260 to 2288 (LMIQPPDCDPFIHGHTNGNCGHPLLAITY) the chain is Extracellular. Residues 2289-2309 (FTSFIIISYMIVINMYIAIIL) form a helical membrane-spanning segment. Topologically, residues 2310–2844 (ENFNQAHQEE…QFESLPDRQR (535 aa)) are cytoplasmic. The IQ domain maps to 2441–2470 (QEKAAKTIQTGWKEYLRRKREKERSNSGDS). 4 disordered regions span residues 2457–2479 (RRKREKERSNSGDSATQTSSPGG), 2584–2668 (SLTS…LSAQ), 2780–2802 (DSPKDPPRGDFSSAPIDDVGAPI), and 2818–2844 (NPEKATDDQGNGQDETAQFESLPDRQR). The segment covering 2467-2479 (SGDSATQTSSPGG) has biased composition (polar residues). Positions 2595 to 2632 (AMNNTTNTTSNSASTSGTASSTATAPATGCGPAATSAS) are enriched in low complexity. The segment covering 2647 to 2658 (SRKRASSFIRKK) has biased composition (basic residues). Residues 2825-2836 (DQGNGQDETAQF) are compositionally biased toward polar residues.

Belongs to the sodium channel (TC 1.A.1.10) family. NaCP60E subfamily. As to expression, in embryonic and larval stages, expression is limited to very few non-neuronal cells in either the CNS or PNS. In pupal and adult stages, expressed in cell bodies of the fly central nervous system, including optic lobes, central brain, subesophageal ganglion, thoracico-abdominal ganglion, major olfactory organs, the third antennal segment and the maxillary palps.

It is found in the cell membrane. In terms of biological role, mediates the voltage-dependent sodium ion permeability of excitable membranes. Plays a role in processing of olfactory information during the olfactory avoidance response. The chain is Sodium channel protein 60E (NaCP60E) from Drosophila melanogaster (Fruit fly).